The primary structure comprises 200 residues: Methylamine utilization protein MauD (200 aa).

The helical transmembrane segment at 4–24 (FLIASNILLWLAFLGVTVVML) threads the bilayer. Residues 49–183 (PDIGDAAPEF…LESLLEADRT (135 aa)) enclose the Thioredoxin domain.

The protein localises to the membrane. Its pathway is one-carbon metabolism; methylamine degradation. Functionally, may be specifically involved in the processing, transport, and/or maturation of the MADH beta-subunit. This is Methylamine utilization protein MauD (mauD) from Paracoccus denitrificans.